A 471-amino-acid polypeptide reads, in one-letter code: Arginine biosynthesis bifunctional protein ArgJ, mitochondrial (471 aa).

6 residues coordinate substrate: threonine 190, lysine 216, threonine 239, glutamate 327, asparagine 466, and serine 471. Threonine 239 serves as the catalytic Nucleophile.

The protein belongs to the ArgJ family. In terms of assembly, heterodimer of an alpha and a beta chain. The alpha and beta chains are autoproteolytically processed from a single precursor protein within the mitochondrion.

Its subcellular location is the mitochondrion matrix. It catalyses the reaction N(2)-acetyl-L-ornithine + L-glutamate = N-acetyl-L-glutamate + L-ornithine. The catalysed reaction is L-glutamate + acetyl-CoA = N-acetyl-L-glutamate + CoA + H(+). Its pathway is amino-acid biosynthesis; L-arginine biosynthesis; L-ornithine and N-acetyl-L-glutamate from L-glutamate and N(2)-acetyl-L-ornithine (cyclic): step 1/1. It functions in the pathway amino-acid biosynthesis; L-arginine biosynthesis; N(2)-acetyl-L-ornithine from L-glutamate: step 1/4. Its function is as follows. Catalyzes two activities which are involved in the cyclic version of arginine biosynthesis: the synthesis of acetylglutamate from glutamate and acetyl-CoA, and of ornithine by transacetylation between acetylornithine and glutamate. The polypeptide is Arginine biosynthesis bifunctional protein ArgJ, mitochondrial (Coprinopsis cinerea (strain Okayama-7 / 130 / ATCC MYA-4618 / FGSC 9003) (Inky cap fungus)).